A 249-amino-acid polypeptide reads, in one-letter code: Low affinity immunoglobulin gamma Fc region receptor III-A (249 aa).

An N-terminal signal peptide occupies residues 1-20; it reads MWYLLLPTALLLTVSSGVGA. Topologically, residues 21–203 are extracellular; it reads GLQKAVVNLD…SPSSFLPWHQ (183 aa). Ig-like C2-type domains lie at 31–103 and 117–188; these read PEWV…QLDV and FQEG…LQIS. Intrachain disulfides connect Cys46/Cys88 and Cys127/Cys171. Asn55 and Asn62 each carry an N-linked (GlcNAc...) asparagine glycan. The N-linked (GlcNAc...) asparagine glycan is linked to Asn179. Residues 204 to 224 form a helical membrane-spanning segment; it reads ITFCLLIGLLFAIDTVLYFSV. The Cytoplasmic portion of the chain corresponds to 225 to 249; that stretch reads QRSLQSSVAVYEEPKLHWSKEPQDK. Position 235 is a phosphotyrosine (Tyr235).

In terms of assembly, forms a heterooligomeric complex with ITAM-containing signaling subunits FCER1G. Interacts (via transmembrane domain) with signaling subunits; this interaction is a prerequisite for receptor complex expression on the cell surface and intracellular signal transduction. Binds the Fc region of antigen-complexed IgG. N-glycosylated. Post-translationally, phosphorylated following receptor ligation.

Its subcellular location is the cell membrane. Functionally, receptor for the invariable Fc fragment of immunoglobulin gamma (IgG). Binds with intermediate affinity to both IgG2a and IgG2b. Can bind to IgG2a and IgG2b monomers. Does not display binding to IgG1 or IgG3. Recognizes neutralizing virus-specific IgGs displayed on the cell surface of infected cells and triggers antibody-dependent cellular cytotoxicity (ADCC). Confers protection to lethal influenza virus infection. On splenic dendritic cells, uptakes antigen immune complexes and efficiently divert them into MHC class I and II antigen presentation pathways to provide for superior priming of CD4-positive and CD8-positive T cell immune responses. Mediates neutrophil activation by IgG complexes redundantly with FCGR2A. Plays a role in promoting bone resorption by enhancing osteoclast differentiation following binding to IgG2a. Also acts as a receptor for the Fc region of immunoglobulin epsilon (IgE). Binds with low affinity to both the a and b allotypes of IgE. Has also been shown to bind to IgE allotype a only but not to allotype b. Binds aggregated IgE but not the monomeric form and bound monomeric IgG is readily displaced by IgE complexes. Binding to IgE promotes macrophage-mediated phagocytosis, antigen presentation to T cells, production of pro-inflammatory cytokines and the late phase of cutaneous allergic reactions. Mediates enhanced ADCC in response to afucosylated IgGs. The sequence is that of Low affinity immunoglobulin gamma Fc region receptor III-A from Rattus norvegicus (Rat).